The primary structure comprises 177 residues: Actinorhodin polyketide dimerase (177 aa).

It to S.pristinaespiralis SnaC.

It functions in the pathway antibiotic biosynthesis; actinorhodin biosynthesis. This chain is Actinorhodin polyketide dimerase (actVB), found in Streptomyces coelicolor (strain ATCC BAA-471 / A3(2) / M145).